Reading from the N-terminus, the 184-residue chain is Sec-independent protein translocase protein TatB (184 aa).

A helical membrane pass occupies residues 1–21; it reads MFDIGFSELVLLFVVGLIVLG. The segment covering 149–168 has biased composition (acidic residues); sequence AEEGEPMLEMGESDFSEDEQ. Positions 149–184 are disordered; the sequence is AEEGEPMLEMGESDFSEDEQATASSNETIENIKEKV.

Belongs to the TatB family. As to quaternary structure, the Tat system comprises two distinct complexes: a TatABC complex, containing multiple copies of TatA, TatB and TatC subunits, and a separate TatA complex, containing only TatA subunits. Substrates initially bind to the TatABC complex, which probably triggers association of the separate TatA complex to form the active translocon.

Its subcellular location is the cell inner membrane. Functionally, part of the twin-arginine translocation (Tat) system that transports large folded proteins containing a characteristic twin-arginine motif in their signal peptide across membranes. Together with TatC, TatB is part of a receptor directly interacting with Tat signal peptides. TatB may form an oligomeric binding site that transiently accommodates folded Tat precursor proteins before their translocation. The sequence is that of Sec-independent protein translocase protein TatB from Histophilus somni (strain 129Pt) (Haemophilus somnus).